Reading from the N-terminus, the 433-residue chain is Serine carboxypeptidase-like 8 (433 aa).

The first 19 residues, 1–19, serve as a signal peptide directing secretion; the sequence is MSLKIKFLLLLVLYHHVDS. 3 cysteine pairs are disulfide-bonded: C78/C323, C241/C255, and C279/C289. N99 carries an N-linked (GlcNAc...) asparagine glycan. The active site involves S173. N283, N324, and N342 each carry an N-linked (GlcNAc...) asparagine glycan. Residues D358 and H411 contribute to the active site. The N-linked (GlcNAc...) asparagine glycan is linked to N418.

It belongs to the peptidase S10 family. N-glycosylated. Highly expressed in seedlings. Expressed in leaves, stems, flowers and siliques, and at low levels in roots.

It is found in the vacuole. It carries out the reaction 1-O-(trans-sinapoyl)-beta-D-glucose + (S)-malate = sinapoyl (S)-malate + D-glucose. The enzyme catalyses 2 1-O-(trans-sinapoyl)-beta-D-glucose = 1,2-di-O-sinapoyl beta-D-glucose + D-glucose. With respect to regulation, 95% inhibition by diisopropyl fluorophosphate (DFP) and 30% by phenylmethylsulfonyl fluoride (PMSF). Involved in plants secondary metabolism. Functions as acyltransferase to form the sinapate ester sinapoylmalate. Also capable of catalyzing the formation of 1,2-bis-O-sinapoyl beta-D-glucoside. The sequence is that of Serine carboxypeptidase-like 8 from Arabidopsis thaliana (Mouse-ear cress).